We begin with the raw amino-acid sequence, 267 residues long: 4-hydroxy-tetrahydrodipicolinate reductase (267 aa).

Position 8–13 (8–13) interacts with NAD(+); that stretch reads GANGRM. R35 lines the NADP(+) pocket. Residues 98–100 and 122–125 contribute to the NAD(+) site; these read GTT and AANY. The active-site Proton donor/acceptor is the H155. H156 is a binding site for (S)-2,3,4,5-tetrahydrodipicolinate. The active-site Proton donor is the K159. Residue 165 to 166 participates in (S)-2,3,4,5-tetrahydrodipicolinate binding; it reads GT.

The protein belongs to the DapB family.

The protein resides in the cytoplasm. The enzyme catalyses (S)-2,3,4,5-tetrahydrodipicolinate + NAD(+) + H2O = (2S,4S)-4-hydroxy-2,3,4,5-tetrahydrodipicolinate + NADH + H(+). The catalysed reaction is (S)-2,3,4,5-tetrahydrodipicolinate + NADP(+) + H2O = (2S,4S)-4-hydroxy-2,3,4,5-tetrahydrodipicolinate + NADPH + H(+). It participates in amino-acid biosynthesis; L-lysine biosynthesis via DAP pathway; (S)-tetrahydrodipicolinate from L-aspartate: step 4/4. Its function is as follows. Catalyzes the conversion of 4-hydroxy-tetrahydrodipicolinate (HTPA) to tetrahydrodipicolinate. The sequence is that of 4-hydroxy-tetrahydrodipicolinate reductase from Pseudoalteromonas atlantica (strain T6c / ATCC BAA-1087).